Reading from the N-terminus, the 171-residue chain is I (171 aa).

2 disordered regions span residues 57 to 100 and 143 to 171; these read IQYP…LFAQ and PRTS…KRRA. Positions 151-162 are enriched in basic and acidic residues; sequence EFKRGGGRERLP.

The protein belongs to the Orthorubulavirus I protein family.

The chain is I from Mumps virus genotype N (strain L-Zagreb vaccine) (MuV).